The chain runs to 224 residues: 7-cyano-7-deazaguanine synthase (224 aa).

8-18 contacts ATP; it reads LSGGMDSAAVI. Zn(2+)-binding residues include Cys-186, Cys-196, Cys-199, and Cys-202.

Belongs to the QueC family. The cofactor is Zn(2+).

It catalyses the reaction 7-carboxy-7-deazaguanine + NH4(+) + ATP = 7-cyano-7-deazaguanine + ADP + phosphate + H2O + H(+). Its pathway is purine metabolism; 7-cyano-7-deazaguanine biosynthesis. Catalyzes the ATP-dependent conversion of 7-carboxy-7-deazaguanine (CDG) to 7-cyano-7-deazaguanine (preQ(0)). The chain is 7-cyano-7-deazaguanine synthase from Xanthomonas axonopodis pv. citri (strain 306).